Here is a 424-residue protein sequence, read N- to C-terminus: 3-ketoacyl-CoA thiolase A, peroxisomal (424 aa).

A peroxisome-targeting transit peptide spans 1 to 26 (MHRLQVVLGHLAGRPESSSALQAAPC). The interval 1-26 (MHRLQVVLGHLAGRPESSSALQAAPC) is PTS2-type peroxisomal targeting signal. The Acyl-thioester intermediate role is filled by Cys-123. Residues Lys-173 and Lys-234 each carry the N6-acetyllysine modification. Residues His-377 and Cys-408 each act as proton acceptor in the active site.

Belongs to the thiolase-like superfamily. Thiolase family. In terms of assembly, homodimer. Interacts (via PTS2-type peroxisomal targeting signal region) with PEX7; leading to its translocation into peroxisomes. In terms of tissue distribution, mainly expressed in liver and intestine.

The protein localises to the peroxisome. The catalysed reaction is an acyl-CoA + acetyl-CoA = a 3-oxoacyl-CoA + CoA. The enzyme catalyses 2 acetyl-CoA = acetoacetyl-CoA + CoA. It catalyses the reaction tetradecanoyl-CoA + acetyl-CoA = 3-oxohexadecanoyl-CoA + CoA. It carries out the reaction hexanoyl-CoA + acetyl-CoA = 3-oxooctanoyl-CoA + CoA. The catalysed reaction is 3-oxohexadecanedioyl-CoA + CoA = tetradecanedioyl-CoA + acetyl-CoA. The enzyme catalyses 3-oxo-(6Z,9Z,12Z,15Z,18Z,21Z)-tetracosahexaenoyl-CoA + CoA = (4Z,7Z,10Z,13Z,16Z,19Z)-docosahexaenoyl-CoA + acetyl-CoA. Its pathway is lipid metabolism; peroxisomal fatty acid beta-oxidation. Functionally, responsible for the thiolytic cleavage of straight chain 3-keto fatty acyl-CoAs (3-oxoacyl-CoAs). Plays an important role in fatty acid peroxisomal beta-oxidation. Catalyzes the cleavage of short, medium, long, and very long straight chain 3-oxoacyl-CoAs. The protein is 3-ketoacyl-CoA thiolase A, peroxisomal of Mus musculus (Mouse).